The chain runs to 228 residues: 3,4-dihydroxy-2-butanone 4-phosphate synthase (228 aa).

Residues arginine 37–glutamate 38, aspartate 42, arginine 150–threonine 154, and glutamate 174 each bind D-ribulose 5-phosphate. Glutamate 38 contacts Mg(2+). Histidine 153 contributes to the Mg(2+) binding site.

This sequence belongs to the DHBP synthase family. In terms of assembly, homodimer. Mg(2+) serves as cofactor. It depends on Mn(2+) as a cofactor.

The enzyme catalyses D-ribulose 5-phosphate = (2S)-2-hydroxy-3-oxobutyl phosphate + formate + H(+). It functions in the pathway cofactor biosynthesis; riboflavin biosynthesis; 2-hydroxy-3-oxobutyl phosphate from D-ribulose 5-phosphate: step 1/1. Catalyzes the conversion of D-ribulose 5-phosphate to formate and 3,4-dihydroxy-2-butanone 4-phosphate. The chain is 3,4-dihydroxy-2-butanone 4-phosphate synthase from Photobacterium profundum (strain SS9).